We begin with the raw amino-acid sequence, 816 residues long: Phosphatidylinositol 4-kinase beta (816 aa).

Disordered regions lie at residues 1–30 (MGDT…GSLL), 101–120 (EDEM…RRRR), and 248–318 (AHRK…SFSS). Gly-2 carries the post-translational modification N-acetylglycine. Residues 2–68 (GDTVVEPAPL…VKLLHGGMAV (67 aa)) form an interaction with ACBD3 region. Residues 52–242 (CQDVLEKVKL…GTKLRKLILS (191 aa)) form the PIK helical domain. Phosphoserine is present on Ser-258. Thr-263 bears the Phosphothreonine mark. Phosphoserine is present on residues Ser-266, Ser-275, Ser-277, Ser-284, and Ser-294. Polar residues-rich tracts occupy residues 278 to 297 (DATA…SNPK) and 306 to 318 (SSST…SFSS). Position 428 is a phosphoserine (Ser-428). At Thr-438 the chain carries Phosphothreonine. Residue Ser-511 is modified to Phosphoserine. Thr-517 and Thr-519 each carry phosphothreonine. The PI3K/PI4K catalytic domain maps to 535–801 (EPWQEKVRRI…MVDGSMRSIT (267 aa)). The G-loop stretch occupies residues 541-547 (VRRIREG). Residues 668–676 (QVKDRHNGN) form a catalytic loop region. The interval 687–711 (HIDFGFILSSSPRNLGFETSAFKLT) is activation loop.

Belongs to the PI3/PI4-kinase family. Type III PI4K subfamily. Interacts with ARF1 and ARF3 in the Golgi complex, but not with ARF4, ARF5 or ARF6. Interacts with NCS1/FREQ in a calcium-independent manner. Interacts with CALN1/CABP8 and CALN2/CABP7; in a calcium-dependent manner; this interaction competes with NCS1/FREQ binding. Interacts with ACBD3. Interacts with ARMH3, YWHAB, YWHAE, YWHAG, YWHAH, YWHAQ, YWHAZ and SFN. Interacts with GGA2 (via VHS domain); the interaction is important for PI4KB location at the Golgi apparatus membrane. Interacts with ATG9A. It depends on Mg(2+) as a cofactor. Mn(2+) serves as cofactor.

The protein resides in the endomembrane system. It localises to the mitochondrion outer membrane. The protein localises to the rough endoplasmic reticulum membrane. Its subcellular location is the golgi apparatus. It is found in the golgi apparatus membrane. The catalysed reaction is a 1,2-diacyl-sn-glycero-3-phospho-(1D-myo-inositol) + ATP = a 1,2-diacyl-sn-glycero-3-phospho-(1D-myo-inositol 4-phosphate) + ADP + H(+). Inhibited by wortmannin. Increased kinase activity upon interaction with NCS1/FREQ. Its function is as follows. Phosphorylates phosphatidylinositol (PI) in the first committed step in the production of the second messenger inositol-1,4,5,-trisphosphate (PIP). May regulate Golgi disintegration/reorganization during mitosis, possibly via its phosphorylation. Involved in Golgi-to-plasma membrane trafficking. The sequence is that of Phosphatidylinositol 4-kinase beta (PI4KB) from Plecturocebus moloch (Dusky titi monkey).